Reading from the N-terminus, the 693-residue chain is Phosphoribosylformylglycinamidine synthase subunit PurL (693 aa).

The active site involves His34. ATP-binding residues include Tyr37 and Lys76. Position 78 (Glu78) interacts with Mg(2+). Substrate is bound by residues Ser79–His82 and Arg101. The active-site Proton acceptor is His80. Mg(2+) is bound at residue Asp102. Gln222 provides a ligand contact to substrate. Asp248 is a Mg(2+) binding site. A substrate-binding site is contributed by Glu292–Gln294. Residues Asp470 and Gly507 each contribute to the ATP site. Ser510 is a binding site for substrate.

This sequence belongs to the FGAMS family. As to quaternary structure, monomer. Part of the FGAM synthase complex composed of 1 PurL, 1 PurQ and 2 PurS subunits.

The protein resides in the cytoplasm. It catalyses the reaction N(2)-formyl-N(1)-(5-phospho-beta-D-ribosyl)glycinamide + L-glutamine + ATP + H2O = 2-formamido-N(1)-(5-O-phospho-beta-D-ribosyl)acetamidine + L-glutamate + ADP + phosphate + H(+). The protein operates within purine metabolism; IMP biosynthesis via de novo pathway; 5-amino-1-(5-phospho-D-ribosyl)imidazole from N(2)-formyl-N(1)-(5-phospho-D-ribosyl)glycinamide: step 1/2. Functionally, part of the phosphoribosylformylglycinamidine synthase complex involved in the purines biosynthetic pathway. Catalyzes the ATP-dependent conversion of formylglycinamide ribonucleotide (FGAR) and glutamine to yield formylglycinamidine ribonucleotide (FGAM) and glutamate. The FGAM synthase complex is composed of three subunits. PurQ produces an ammonia molecule by converting glutamine to glutamate. PurL transfers the ammonia molecule to FGAR to form FGAM in an ATP-dependent manner. PurS interacts with PurQ and PurL and is thought to assist in the transfer of the ammonia molecule from PurQ to PurL. This is Phosphoribosylformylglycinamidine synthase subunit PurL from Pyrobaculum calidifontis (strain DSM 21063 / JCM 11548 / VA1).